The primary structure comprises 172 residues: Resuscitation-promoting factor RpfE (172 aa).

The N-terminal stretch at 1-28 is a signal peptide; the sequence is MKNARTTLIAAAIAGTLVTTSPAGIANA. Residues 33–89 form a disordered region; that stretch reads LDPNAAAGPDAVGFDPNLPPAPDAAPVDTPPAPEDAGFDPNLPPPLAPDFLSPPAEE. Positions 49–65 are enriched in pro residues; the sequence is NLPPAPDAAPVDTPPAP.

Belongs to the transglycosylase family. Rpf subfamily. In terms of assembly, interacts with RipA.

Factor that stimulates resuscitation of dormant cells. Has peptidoglycan (PG) hydrolytic activity. Active in the pM concentration range. Has little to no effect on actively-growing cells. PG fragments could either directly activate the resuscitation pathway of dormant bacteria or serve as a substrate for endogenous Rpf, resulting in low molecular weight products with resuscitation activity. In terms of biological role, stimulates growth of stationary phase M.bovis (a slow-growing Mycobacterium), reduces the lag phase of diluted fast-growers M.smegmatis and Micrococcus luteus. Sequential gene disruption indicates RpfB and RpfE are higher than RpfD and RpfC in functional hierarchy. The chain is Resuscitation-promoting factor RpfE (rpfE) from Mycobacterium tuberculosis (strain ATCC 25618 / H37Rv).